An 838-amino-acid polypeptide reads, in one-letter code: Protein translocase subunit SecA (838 aa).

ATP is bound by residues glutamine 87, glycine 105–threonine 109, and aspartate 494. Basic and acidic residues-rich tracts occupy residues glutamate 781 to threonine 790 and glutamate 803 to arginine 819. The tract at residues glutamate 781–lysine 838 is disordered. Cysteine 823, cysteine 825, cysteine 834, and histidine 835 together coordinate Zn(2+). The segment covering lysine 829–lysine 838 has biased composition (basic residues).

This sequence belongs to the SecA family. Monomer and homodimer. Part of the essential Sec protein translocation apparatus which comprises SecA, SecYEG and auxiliary proteins SecDF-YajC and YidC. Requires Zn(2+) as cofactor.

Its subcellular location is the cell inner membrane. The protein localises to the cytoplasm. It catalyses the reaction ATP + H2O + cellular proteinSide 1 = ADP + phosphate + cellular proteinSide 2.. Part of the Sec protein translocase complex. Interacts with the SecYEG preprotein conducting channel. Has a central role in coupling the hydrolysis of ATP to the transfer of proteins into and across the cell membrane, serving as an ATP-driven molecular motor driving the stepwise translocation of polypeptide chains across the membrane. The polypeptide is Protein translocase subunit SecA (Solidesulfovibrio magneticus (strain ATCC 700980 / DSM 13731 / RS-1) (Desulfovibrio magneticus)).